Reading from the N-terminus, the 429-residue chain is Na(+)/H(+) antiporter NhaA 1 (429 aa).

The next 12 helical transmembrane spans lie at 32–52, 73–93, 111–131, 140–160, 170–190, 193–213, 219–239, 243–263, 284–304, 316–336, 349–369, and 383–403; these read ISGGLLLAATVLALGWANSPW, LSVQQWAADGLLAIFFFVAGL, VVPVAAAAGGVAVPAVLYSLL, GWAIPTATDIAFALSVLAVVG, FLLTLAVVDDLLAIVIIAVAY, ELSVVPLVAAVVPLAAFTLLV, AWWLLLPLAVLTWALVHASGV, VAGVLLAFAVPVLRSEGAGGP, VAVPVFAFCSAGVTVGGLGGL, VVVGLVVGKAIGIFTTTWLVA, WVDVAGLALLGGVGFTVSLLI, and HVKVGVLTASVTAALLATVVL.

The protein belongs to the NhaA Na(+)/H(+) (TC 2.A.33) antiporter family.

It localises to the cell membrane. It catalyses the reaction Na(+)(in) + 2 H(+)(out) = Na(+)(out) + 2 H(+)(in). Na(+)/H(+) antiporter that extrudes sodium in exchange for external protons. The polypeptide is Na(+)/H(+) antiporter NhaA 1 (Frankia alni (strain DSM 45986 / CECT 9034 / ACN14a)).